A 240-amino-acid polypeptide reads, in one-letter code: Uridylate kinase (240 aa).

13–16 (KFSG) contributes to the ATP binding site. Glycine 55 provides a ligand contact to UMP. The ATP site is built by glycine 56 and arginine 60. Residues aspartate 76 and 137-144 (TGNPFFTT) each bind UMP. ATP is bound by residues threonine 164, tyrosine 170, and aspartate 173.

The protein belongs to the UMP kinase family. Homohexamer.

It localises to the cytoplasm. The enzyme catalyses UMP + ATP = UDP + ADP. Its pathway is pyrimidine metabolism; CTP biosynthesis via de novo pathway; UDP from UMP (UMPK route): step 1/1. Its activity is regulated as follows. Inhibited by UTP. Functionally, catalyzes the reversible phosphorylation of UMP to UDP. The polypeptide is Uridylate kinase (Helicobacter pylori (strain J99 / ATCC 700824) (Campylobacter pylori J99)).